Here is a 434-residue protein sequence, read N- to C-terminus: Chaperone SurA (434 aa).

An N-terminal signal peptide occupies residues 1-22 (MKKWKSSLLGIAIWSLAASSMA). PpiC domains follow at residues 173–274 (TVQF…KVND) and 283–383 (VTEV…EVLD).

It localises to the periplasm. The catalysed reaction is [protein]-peptidylproline (omega=180) = [protein]-peptidylproline (omega=0). Functionally, chaperone involved in the correct folding and assembly of outer membrane proteins. Recognizes specific patterns of aromatic residues and the orientation of their side chains, which are found more frequently in integral outer membrane proteins. May act in both early periplasmic and late outer membrane-associated steps of protein maturation. This is Chaperone SurA from Photobacterium profundum (strain SS9).